The following is a 395-amino-acid chain: Gastric triacylglycerol lipase (395 aa).

A signal peptide spans 1-18 (MWLLLITSVISTFGGAHG). N-linked (GlcNAc...) asparagine glycosylation is found at Asn-33, Asn-68, and Asn-98. The AB hydrolase-1 domain occupies 77–376 (PVVYLQHGLI…LAYNHLDFIW (300 aa)). Ser-171 (nucleophile) is an active-site residue. A disulfide bridge links Cys-245 with Cys-254. Asn-270 is a glycosylation site (N-linked (GlcNAc...) asparagine). Residues Asp-342 and His-371 each act as charge relay system in the active site.

It belongs to the AB hydrolase superfamily. Lipase family. Secreted by the serous (von Ebner's) glands at the back of the rat tongue.

The protein resides in the secreted. It carries out the reaction a triacylglycerol + H2O = a diacylglycerol + a fatty acid + H(+). It catalyses the reaction 1,2,3-tri-(9Z-octadecenoyl)-glycerol + H2O = 1,2-di-(9Z-octadecenoyl)-sn-glycerol + (9Z)-octadecenoate + H(+). The enzyme catalyses 1,2,3-trioctanoylglycerol + H2O = 1,2-dioctanoyl-sn-glycerol + octanoate + H(+). In terms of biological role, catalyzes the hydrolysis of triacylglycerols to yield free fatty acids, diacylglycerol, monoacylglycerol, and glycerol. Shows a preferential hydrolysis at the sn-3 position of triacylglycerol. The polypeptide is Gastric triacylglycerol lipase (Lipf) (Rattus norvegicus (Rat)).